The following is a 273-amino-acid chain: Putative esterase/lipase 3 (273 aa).

His-34 is an active-site residue. Ser-100 serves as the catalytic Charge relay system.

It belongs to the lipase/esterase LIP3/BchO family.

The protein is Putative esterase/lipase 3 of Mycoplasma genitalium (strain ATCC 33530 / DSM 19775 / NCTC 10195 / G37) (Mycoplasmoides genitalium).